Here is a 474-residue protein sequence, read N- to C-terminus: Putative response regulator NtrX-like (474 aa).

The Response regulatory domain occupies Asp-5 to Cys-121. A 4-aspartylphosphate modification is found at Asp-54. The 226-residue stretch at Leu-143 to Ile-368 folds into the Sigma-54 factor interaction domain. ATP contacts are provided by residues Gly-171 to Glu-178 and Ala-231 to Glu-240.

Member of the two-component regulatory system RC0849/RC0948. The polypeptide is Putative response regulator NtrX-like (Rickettsia conorii (strain ATCC VR-613 / Malish 7)).